Here is a 211-residue protein sequence, read N- to C-terminus: Urease accessory protein UreF (211 aa).

It belongs to the UreF family. In terms of assembly, ureD, UreF and UreG form a complex that acts as a GTP-hydrolysis-dependent molecular chaperone, activating the urease apoprotein by helping to assemble the nickel containing metallocenter of UreC. The UreE protein probably delivers the nickel.

The protein resides in the cytoplasm. Functionally, required for maturation of urease via the functional incorporation of the urease nickel metallocenter. In Mycobacterium sp. (strain JLS), this protein is Urease accessory protein UreF.